Reading from the N-terminus, the 398-residue chain is MQKRLTLLGSTGSIGDSTLDVVARHPERFSVYALTAHRNGDKLVEQCLRFAPEVAVVGDAATAAHVEARLRAAGSRTTVLYGPQALVDVSKSDGCDTVVAAIVGAAGLAPSLAAARAGKRILLANKESLVMSGAIFMDAVRDHGAILLPVDSEHNAIFQCMPRDAAEHGGIAKIILTASGGPFRTREPATLVDVTPDEACKHPNWVMGRKISVDSATMMNKGLEVIEAHWIFGLPGDRIDVLIHPQSVIHSLVSYRDGSVLAQLGNPDMRTPIAHALAFPERVDAGVEQLDLAQIAQLSFEKPDYARFPCLALALKALAEGGIASAALNAANEVAVEAFLERRIGFMAIAATVEAVLDALPNRAPDGLDDVLAADAEARRLAAEIIAKAPARRVERTV.

Threonine 11, glycine 12, serine 13, isoleucine 14, arginine 38, asparagine 39, and asparagine 125 together coordinate NADPH. Residue lysine 126 coordinates 1-deoxy-D-xylulose 5-phosphate. Glutamate 127 contributes to the NADPH binding site. Residue aspartate 151 coordinates Mn(2+). Residues serine 152, glutamate 153, serine 179, and histidine 202 each contribute to the 1-deoxy-D-xylulose 5-phosphate site. Glutamate 153 serves as a coordination point for Mn(2+). Glycine 208 is an NADPH binding site. The 1-deoxy-D-xylulose 5-phosphate site is built by serine 215, asparagine 220, lysine 221, and glutamate 224. Mn(2+) is bound at residue glutamate 224.

The protein belongs to the DXR family. It depends on Mg(2+) as a cofactor. Mn(2+) serves as cofactor.

It carries out the reaction 2-C-methyl-D-erythritol 4-phosphate + NADP(+) = 1-deoxy-D-xylulose 5-phosphate + NADPH + H(+). It functions in the pathway isoprenoid biosynthesis; isopentenyl diphosphate biosynthesis via DXP pathway; isopentenyl diphosphate from 1-deoxy-D-xylulose 5-phosphate: step 1/6. Catalyzes the NADPH-dependent rearrangement and reduction of 1-deoxy-D-xylulose-5-phosphate (DXP) to 2-C-methyl-D-erythritol 4-phosphate (MEP). This is 1-deoxy-D-xylulose 5-phosphate reductoisomerase from Burkholderia multivorans (strain ATCC 17616 / 249).